Reading from the N-terminus, the 388-residue chain is Succinate--CoA ligase [ADP-forming] subunit beta (388 aa).

Positions 9–244 constitute an ATP-grasp domain; it reads KDLLSSYDIA…PSQENVRDVL (236 aa). Residues K46, 53–55, V102, and E107 contribute to the ATP site; that span reads GRG. Residues N199 and D213 each coordinate Mg(2+). Substrate contacts are provided by residues N264 and 321–323; that span reads GIM.

It belongs to the succinate/malate CoA ligase beta subunit family. Heterotetramer of two alpha and two beta subunits. Mg(2+) is required as a cofactor.

The enzyme catalyses succinate + ATP + CoA = succinyl-CoA + ADP + phosphate. It catalyses the reaction GTP + succinate + CoA = succinyl-CoA + GDP + phosphate. It functions in the pathway carbohydrate metabolism; tricarboxylic acid cycle; succinate from succinyl-CoA (ligase route): step 1/1. In terms of biological role, succinyl-CoA synthetase functions in the citric acid cycle (TCA), coupling the hydrolysis of succinyl-CoA to the synthesis of either ATP or GTP and thus represents the only step of substrate-level phosphorylation in the TCA. The beta subunit provides nucleotide specificity of the enzyme and binds the substrate succinate, while the binding sites for coenzyme A and phosphate are found in the alpha subunit. The protein is Succinate--CoA ligase [ADP-forming] subunit beta of Chlamydia felis (strain Fe/C-56) (Chlamydophila felis).